Consider the following 590-residue polypeptide: Protein Spindly (590 aa).

Residues 1–401 (MSDLEDEIKV…SMARMKALSE (401 aa)) adopt a coiled-coil conformation. The segment at 446 to 590 (NKAQVQKRRR…KTMANECAQQ (145 aa)) is disordered. 2 stretches are compositionally biased toward basic and acidic residues: residues 483 to 497 (SNEK…HPVE) and 518 to 527 (RESKSVRICE). 2 stretches are compositionally biased toward polar residues: residues 541-554 (VNDS…QTHQ) and 572-590 (QQPT…CAQQ).

Belongs to the Spindly family.

It is found in the chromosome. The protein localises to the centromere. It localises to the kinetochore. Required for the localization of dynein and dynactin to the mitotic kintochore. Dynein is believed to control the initial lateral interaction between the kinetochore and spindle microtubules and to facilitate the subsequent formation of end-on kinetochore-microtubule attachments mediated by the NDC80 complex. May act as an adapter protein linking the dynein motor complex to various cargos. The sequence is that of Protein Spindly (spdl1) from Danio rerio (Zebrafish).